Reading from the N-terminus, the 153-residue chain is 6,7-dimethyl-8-ribityllumazine synthase (153 aa).

5-amino-6-(D-ribitylamino)uracil is bound by residues phenylalanine 22, 56-58 (AFE), and 80-82 (AVI). 85 to 86 (GT) provides a ligand contact to (2S)-2-hydroxy-3-oxobutyl phosphate. Catalysis depends on histidine 88, which acts as the Proton donor. Phenylalanine 113 serves as a coordination point for 5-amino-6-(D-ribitylamino)uracil. A (2S)-2-hydroxy-3-oxobutyl phosphate-binding site is contributed by arginine 127.

This sequence belongs to the DMRL synthase family. In terms of assembly, forms an icosahedral capsid composed of 60 subunits, arranged as a dodecamer of pentamers.

The catalysed reaction is (2S)-2-hydroxy-3-oxobutyl phosphate + 5-amino-6-(D-ribitylamino)uracil = 6,7-dimethyl-8-(1-D-ribityl)lumazine + phosphate + 2 H2O + H(+). It participates in cofactor biosynthesis; riboflavin biosynthesis; riboflavin from 2-hydroxy-3-oxobutyl phosphate and 5-amino-6-(D-ribitylamino)uracil: step 1/2. Functionally, catalyzes the formation of 6,7-dimethyl-8-ribityllumazine by condensation of 5-amino-6-(D-ribitylamino)uracil with 3,4-dihydroxy-2-butanone 4-phosphate. This is the penultimate step in the biosynthesis of riboflavin. This is 6,7-dimethyl-8-ribityllumazine synthase from Hydrogenovibrio crunogenus (strain DSM 25203 / XCL-2) (Thiomicrospira crunogena).